The primary structure comprises 457 residues: ATP synthase subunit beta (457 aa).

147-154 provides a ligand contact to ATP; that stretch reads GGAGVGKT.

Belongs to the ATPase alpha/beta chains family. In terms of assembly, F-type ATPases have 2 components, CF(1) - the catalytic core - and CF(0) - the membrane proton channel. CF(1) has five subunits: alpha(3), beta(3), gamma(1), delta(1), epsilon(1). CF(0) has three main subunits: a(1), b(2) and c(9-12). The alpha and beta chains form an alternating ring which encloses part of the gamma chain. CF(1) is attached to CF(0) by a central stalk formed by the gamma and epsilon chains, while a peripheral stalk is formed by the delta and b chains.

The protein resides in the cell inner membrane. It catalyses the reaction ATP + H2O + 4 H(+)(in) = ADP + phosphate + 5 H(+)(out). Produces ATP from ADP in the presence of a proton gradient across the membrane. The catalytic sites are hosted primarily by the beta subunits. This chain is ATP synthase subunit beta, found in Pasteurella multocida (strain Pm70).